The primary structure comprises 315 residues: 7,8-didemethyl-8-hydroxy-5-deazariboflavin synthase (315 aa).

The Radical SAM core domain occupies 6–237; the sequence is ITYSPAFTLV…EDITIQIPAN (232 aa). Residues Cys20, Cys24, and Cys27 each coordinate [4Fe-4S] cluster.

Belongs to the radical SAM superfamily. CofG family. Consists of two subunits, CofG and CofH. It depends on [4Fe-4S] cluster as a cofactor.

The enzyme catalyses 5-amino-5-(4-hydroxybenzyl)-6-(D-ribitylimino)-5,6-dihydrouracil + S-adenosyl-L-methionine = 7,8-didemethyl-8-hydroxy-5-deazariboflavin + 5'-deoxyadenosine + L-methionine + NH4(+) + H(+). Its pathway is cofactor biosynthesis; coenzyme F0 biosynthesis. Catalyzes the radical-mediated synthesis of 7,8-didemethyl-8-hydroxy-5-deazariboflavin from 5-amino-5-(4-hydroxybenzyl)-6-(D-ribitylimino)-5,6-dihydrouracil. This is 7,8-didemethyl-8-hydroxy-5-deazariboflavin synthase from Thermosynechococcus vestitus (strain NIES-2133 / IAM M-273 / BP-1).